Consider the following 247-residue polypeptide: 5'-nucleotidase SurE (247 aa).

4 residues coordinate a divalent metal cation: Asp8, Asp9, Ser39, and Asn91.

This sequence belongs to the SurE nucleotidase family. A divalent metal cation is required as a cofactor.

The protein localises to the cytoplasm. It catalyses the reaction a ribonucleoside 5'-phosphate + H2O = a ribonucleoside + phosphate. In terms of biological role, nucleotidase that shows phosphatase activity on nucleoside 5'-monophosphates. In Aromatoleum aromaticum (strain DSM 19018 / LMG 30748 / EbN1) (Azoarcus sp. (strain EbN1)), this protein is 5'-nucleotidase SurE.